The chain runs to 429 residues: MIAEIVSIGDELLKGGKVNTNASFIAAALGGIGVPVIRIVACSDDEDQIITVLSESLSRTDLVLVTGGLGPTRDDRTKKAVMRLLQRSVVESEEAFHMLASWFTARGRMLPDTLRDQATIIEGSVLVPNSVGTAAGMIISCGERFGNSSLVLMPGVPSEMQEMMRKTVIPFFAGQSTTAILHTPVKTVGIGESALADLIAAEEDALPEGTTLAYLPHTAGVDLVVSTVGSITEVVERDNRRVVDAILSRAGRFIYATGDTTLEETVGRMLAENSLSIAVAESCTGGLLASRLTDVPGSSAYFQQGIISYSNDAKVQLLGVDRMTLEAFGAVSEPVAKEMARGVLERSGADIAVSTTGIAGPSGGSGDKPVGTLCIGIAGKKSDGSIAFRTGTFRMAGTRAQNKQRFSEAALREAWTYLQEVVGPVRVAG.

This sequence belongs to the CinA family.

This chain is CinA-like protein, found in Chlorobium limicola (strain DSM 245 / NBRC 103803 / 6330).